The following is a 267-amino-acid chain: Small ribosomal subunit protein uS5 (267 aa).

Residues 1 to 37 (MADEAPARSGFRGGFGSRGGRGGRGRGRGRWARGRGK) form a disordered region. Positions 11 to 20 (FRGGFGSRGG) are enriched in gly residues. The segment covering 21–34 (RGGRGRGRGRWARG) has biased composition (basic residues). Residue S60 is modified to Phosphoserine. One can recognise an S5 DRBM domain in the interval 85–148 (LKDEVLKIMP…ILAKLSVVPV (64 aa)).

This sequence belongs to the universal ribosomal protein uS5 family.

Component of the ribosome, a large ribonucleoprotein complex responsible for the synthesis of proteins in the cell. The small ribosomal subunit (SSU) binds messenger RNAs (mRNAs) and translates the encoded message by selecting cognate aminoacyl-transfer RNA (tRNA) molecules. The large subunit (LSU) contains the ribosomal catalytic site termed the peptidyl transferase center (PTC), which catalyzes the formation of peptide bonds, thereby polymerizing the amino acids delivered by tRNAs into a polypeptide chain. The nascent polypeptides leave the ribosome through a tunnel in the LSU and interact with protein factors that function in enzymatic processing, targeting, and the membrane insertion of nascent chains at the exit of the ribosomal tunnel. Plays a role in the assembly and function of the 40S ribosomal subunit. Mutations in this protein affects the control of translational fidelity. Involved in nucleolar processing of pre-18S ribosomal RNA and ribosome assembly. Has a specific developmental role during oogenesis. The sequence is that of Small ribosomal subunit protein uS5 (RpS2) from Drosophila melanogaster (Fruit fly).